The following is a 412-amino-acid chain: Glucose-1-phosphate adenylyltransferase (412 aa).

Residues G169, 184-185, and S201 contribute to the alpha-D-glucose 1-phosphate site; that span reads EK.

This sequence belongs to the bacterial/plant glucose-1-phosphate adenylyltransferase family. In terms of assembly, homotetramer.

It catalyses the reaction alpha-D-glucose 1-phosphate + ATP + H(+) = ADP-alpha-D-glucose + diphosphate. Its pathway is glycan biosynthesis; glycogen biosynthesis. In terms of biological role, involved in the biosynthesis of ADP-glucose, a building block required for the elongation reactions to produce glycogen. Catalyzes the reaction between ATP and alpha-D-glucose 1-phosphate (G1P) to produce pyrophosphate and ADP-Glc. This is Glucose-1-phosphate adenylyltransferase from Geobacter metallireducens (strain ATCC 53774 / DSM 7210 / GS-15).